The chain runs to 296 residues: tRNA U34 carboxymethyltransferase (296 aa).

Residues Lys64, Trp78, Lys83, Gly102, 124–126 (DPS), 151–152 (VE), Tyr171, and Arg286 contribute to the carboxy-S-adenosyl-L-methionine site.

This sequence belongs to the class I-like SAM-binding methyltransferase superfamily. CmoB family. As to quaternary structure, homotetramer.

The enzyme catalyses carboxy-S-adenosyl-L-methionine + 5-hydroxyuridine(34) in tRNA = 5-carboxymethoxyuridine(34) in tRNA + S-adenosyl-L-homocysteine + H(+). Functionally, catalyzes carboxymethyl transfer from carboxy-S-adenosyl-L-methionine (Cx-SAM) to 5-hydroxyuridine (ho5U) to form 5-carboxymethoxyuridine (cmo5U) at position 34 in tRNAs. The chain is tRNA U34 carboxymethyltransferase from Sulfurimonas denitrificans (strain ATCC 33889 / DSM 1251) (Thiomicrospira denitrificans (strain ATCC 33889 / DSM 1251)).